The primary structure comprises 151 residues: Peptide deformylase (151 aa).

Residues Cys-88 and His-130 each contribute to the Fe cation site. Glu-131 is an active-site residue. His-134 serves as a coordination point for Fe cation.

This sequence belongs to the polypeptide deformylase family. Fe(2+) is required as a cofactor.

The catalysed reaction is N-terminal N-formyl-L-methionyl-[peptide] + H2O = N-terminal L-methionyl-[peptide] + formate. Removes the formyl group from the N-terminal Met of newly synthesized proteins. Requires at least a dipeptide for an efficient rate of reaction. N-terminal L-methionine is a prerequisite for activity but the enzyme has broad specificity at other positions. The chain is Peptide deformylase from Heliobacterium modesticaldum (strain ATCC 51547 / Ice1).